Here is a 380-residue protein sequence, read N- to C-terminus: Polygalacturonase 2 (380 aa).

Positions 1-20 are cleaved as a signal peptide; it reads MIAGSKLLMLGLFGALAVHA. A propeptide spanning residues 21–38 is cleaved from the precursor; the sequence is LPEPAKAQVTAAPKLEER. C42 and C60 form a disulfide bridge. PbH1 repeat units lie at residues 173–204 and 205–226; these read ATDL…DVGS and STGI…AVNS. The Proton donor role is filled by D219. C221 and C237 are joined by a disulfide. H241 is an active-site residue. PbH1 repeat units lie at residues 256–277, 285–307, and 319–364; these read VANV…RIKT, VKNV…VIEQ, and TDGV…SVSG. N287 carries N-linked (GlcNAc...) asparagine glycosylation. 2 cysteine pairs are disulfide-bonded: C347–C352 and C371–C380.

It belongs to the glycosyl hydrolase 28 family.

It localises to the secreted. It catalyses the reaction (1,4-alpha-D-galacturonosyl)n+m + H2O = (1,4-alpha-D-galacturonosyl)n + (1,4-alpha-D-galacturonosyl)m.. The sequence is that of Polygalacturonase 2 (PG2) from Penicillium olsonii.